Here is a 417-residue protein sequence, read N- to C-terminus: Adenosylhomocysteinase (417 aa).

Positions 53, 125, and 149 each coordinate substrate. An NAD(+)-binding site is contributed by 150–152; it reads TTT. Positions 179 and 183 each coordinate substrate. Residues Asn184, 213 to 218, Glu236, Asn271, 292 to 294, and Asn339 contribute to the NAD(+) site; these read GYGWVG and AGH.

This sequence belongs to the adenosylhomocysteinase family. It depends on NAD(+) as a cofactor.

Its subcellular location is the cytoplasm. The catalysed reaction is S-adenosyl-L-homocysteine + H2O = L-homocysteine + adenosine. Its pathway is amino-acid biosynthesis; L-homocysteine biosynthesis; L-homocysteine from S-adenosyl-L-homocysteine: step 1/1. Its function is as follows. May play a key role in the regulation of the intracellular concentration of adenosylhomocysteine. In Saccharolobus solfataricus (strain ATCC 35092 / DSM 1617 / JCM 11322 / P2) (Sulfolobus solfataricus), this protein is Adenosylhomocysteinase.